The primary structure comprises 943 residues: Isoleucine--tRNA ligase (943 aa).

Residues 58–68 carry the 'HIGH' region motif; sequence PYANGNIHIGH. Glutamate 567 lines the L-isoleucyl-5'-AMP pocket. A 'KMSKS' region motif is present at residues 608-612; that stretch reads KMSKS. Lysine 611 contacts ATP. 4 residues coordinate Zn(2+): cysteine 906, cysteine 909, cysteine 926, and cysteine 929.

It belongs to the class-I aminoacyl-tRNA synthetase family. IleS type 1 subfamily. Monomer. The cofactor is Zn(2+).

It localises to the cytoplasm. The catalysed reaction is tRNA(Ile) + L-isoleucine + ATP = L-isoleucyl-tRNA(Ile) + AMP + diphosphate. Its function is as follows. Catalyzes the attachment of isoleucine to tRNA(Ile). As IleRS can inadvertently accommodate and process structurally similar amino acids such as valine, to avoid such errors it has two additional distinct tRNA(Ile)-dependent editing activities. One activity is designated as 'pretransfer' editing and involves the hydrolysis of activated Val-AMP. The other activity is designated 'posttransfer' editing and involves deacylation of mischarged Val-tRNA(Ile). The protein is Isoleucine--tRNA ligase of Stutzerimonas stutzeri (strain A1501) (Pseudomonas stutzeri).